The following is a 274-amino-acid chain: Reaction center protein L chain (274 aa).

Residues 2 to 32 (ALLSFERKYRVRGGTLIGGDLFDFWVGPYFV) are Cytoplasmic-facing. The chain crosses the membrane as a helical span at residues 33–53 (GFFGVSAIFFIFLGVSLIGYA). At 54 to 83 (ASQGPTWDPFAISINPPDLKYGLGAAPLLE) the chain is on the periplasmic side. A helical membrane pass occupies residues 84–111 (GGFWQAITVCALGAFISWMLREVEISRK). Topologically, residues 112–115 (LGIG) are cytoplasmic. The helical transmembrane segment at 116–139 (WHVPLAFCVPIFMFCVLQVFRPLL) threads the bilayer. At 140 to 170 (LGSWGHAFPYGILSHLDWVNNFGYQYLNWHY) the chain is on the periplasmic side. Residues histidine 154 and histidine 174 each coordinate (7R,8Z)-bacteriochlorophyll b. Residues 171 to 198 (NPGHMSSVSFLFVNAMALGLHGGLILSV) traverse the membrane as a helical segment. Histidine 191 serves as a coordination point for Fe cation. At 199 to 225 (ANPGDGDKVKTAEHENQYFRDVVGYSI) the chain is on the cytoplasmic side. Position 217 (phenylalanine 217) interacts with a ubiquinone. Residues 226–249 (GALSIHRLGLFLASNIFLTGAFGT) traverse the membrane as a helical segment. Histidine 231 contributes to the Fe cation binding site. Residues 250–274 (IASGPFWTRGWPEWWGWWLDIPFWS) are Periplasmic-facing.

Belongs to the reaction center PufL/M/PsbA/D family. As to quaternary structure, reaction center is composed of four bacteriochlorophylls, two bacteriopheophytins, two ubiquinones, one iron, and three highly hydrophobic polypeptide chains (designated L, M, and H).

The protein resides in the cellular chromatophore membrane. Its function is as follows. The reaction center is a membrane-bound complex that mediates the initial photochemical event in the electron transfer process of photosynthesis. This Blastochloris viridis (Rhodopseudomonas viridis) protein is Reaction center protein L chain (pufL).